A 129-amino-acid polypeptide reads, in one-letter code: M-zodatoxin-Lt8e (129 aa).

Positions 1–20 are cleaved as a signal peptide; it reads MKYFVVALALVAAFVCIAES. Residues 21-60 constitute a propeptide that is removed on maturation; sequence KPAESEHELAEVEEENELADLEDAVWLEHLADLSDLEEAR. Positions 57 to 60 match the Processing quadruplet motif motif; it reads EEAR.

Cleavage of the propeptide depends on the processing quadruplet motif (XXXR, with at least one of X being E). Expressed by the venom gland.

It localises to the secreted. Functionally, insecticidal, cytolytic and antimicrobial peptide. Forms voltage-dependent, ion-permeable channels in membranes. At high concentration causes cell membrane lysis. The polypeptide is M-zodatoxin-Lt8e (cit 1-5) (Lachesana tarabaevi (Spider)).